Reading from the N-terminus, the 459-residue chain is RuvB-like helicase 1 (459 aa).

75–82 (GGPSTGKT) contributes to the ATP binding site.

This sequence belongs to the RuvB family. As to quaternary structure, may form heterododecamers with RVB2. Component of the SWR1 chromatin remodeling complex, the INO80 chromatin remodeling complex, and of the R2TP complex.

Its subcellular location is the nucleus. It catalyses the reaction ATP + H2O = ADP + phosphate + H(+). In terms of biological role, DNA helicase which participates in several chromatin remodeling complexes, including the SWR1 and the INO80 complexes. The SWR1 complex mediates the ATP-dependent exchange of histone H2A for the H2A variant HZT1 leading to transcriptional regulation of selected genes by chromatin remodeling. The INO80 complex remodels chromatin by shifting nucleosomes and is involved in DNA repair. Also involved in pre-rRNA processing. In Eremothecium gossypii (strain ATCC 10895 / CBS 109.51 / FGSC 9923 / NRRL Y-1056) (Yeast), this protein is RuvB-like helicase 1 (RVB1).